The chain runs to 517 residues: tRNA-2-methylthio-N(6)-dimethylallyladenosine synthase (517 aa).

Residues 29–146 (RTYQVRTYGC…LPTLLERARH (118 aa)) enclose the MTTase N-terminal domain. C38, C75, C109, C183, C187, and C190 together coordinate [4Fe-4S] cluster. Positions 169-405 (RESAYAAWVS…VELQESISLQ (237 aa)) constitute a Radical SAM core domain. One can recognise a TRAM domain in the interval 408 to 475 (QALVGQTVEL…PHHLIADAGV (68 aa)).

It belongs to the methylthiotransferase family. MiaB subfamily. In terms of assembly, monomer. [4Fe-4S] cluster serves as cofactor.

It localises to the cytoplasm. It carries out the reaction N(6)-dimethylallyladenosine(37) in tRNA + (sulfur carrier)-SH + AH2 + 2 S-adenosyl-L-methionine = 2-methylsulfanyl-N(6)-dimethylallyladenosine(37) in tRNA + (sulfur carrier)-H + 5'-deoxyadenosine + L-methionine + A + S-adenosyl-L-homocysteine + 2 H(+). In terms of biological role, catalyzes the methylthiolation of N6-(dimethylallyl)adenosine (i(6)A), leading to the formation of 2-methylthio-N6-(dimethylallyl)adenosine (ms(2)i(6)A) at position 37 in tRNAs that read codons beginning with uridine. The polypeptide is tRNA-2-methylthio-N(6)-dimethylallyladenosine synthase (Mycolicibacterium paratuberculosis (strain ATCC BAA-968 / K-10) (Mycobacterium paratuberculosis)).